Reading from the N-terminus, the 200-residue chain is Protein Rv0461 (200 aa).

The disordered stretch occupies residues 47–67 (DRAGKSWPGSTPKPQEDPVGV). 3 helical membrane-spanning segments follow: residues 102–122 (FVLV…SLFY), 134–154 (VFVV…LALV), and 159–179 (LITA…AAAA).

It localises to the cell membrane. This is Protein Rv0461 from Mycobacterium tuberculosis (strain ATCC 25618 / H37Rv).